The following is a 63-amino-acid chain: Large ribosomal subunit protein uL29 (63 aa).

It belongs to the universal ribosomal protein uL29 family.

The polypeptide is Large ribosomal subunit protein uL29 (Actinobacillus succinogenes (strain ATCC 55618 / DSM 22257 / CCUG 43843 / 130Z)).